Reading from the N-terminus, the 266-residue chain is Thymidylate synthase (266 aa).

R24 provides a ligand contact to dUMP. H54 is a (6R)-5,10-methylene-5,6,7,8-tetrahydrofolate binding site. 129 to 130 (RR) lines the dUMP pocket. C149 acts as the Nucleophile in catalysis. DUMP-binding positions include 169–172 (RSAD), N180, and 210–212 (HIY). D172 contributes to the (6R)-5,10-methylene-5,6,7,8-tetrahydrofolate binding site. (6R)-5,10-methylene-5,6,7,8-tetrahydrofolate is bound at residue A265.

Belongs to the thymidylate synthase family. Bacterial-type ThyA subfamily. In terms of assembly, homodimer.

Its subcellular location is the cytoplasm. The enzyme catalyses dUMP + (6R)-5,10-methylene-5,6,7,8-tetrahydrofolate = 7,8-dihydrofolate + dTMP. It participates in pyrimidine metabolism; dTTP biosynthesis. Its function is as follows. Catalyzes the reductive methylation of 2'-deoxyuridine-5'-monophosphate (dUMP) to 2'-deoxythymidine-5'-monophosphate (dTMP) while utilizing 5,10-methylenetetrahydrofolate (mTHF) as the methyl donor and reductant in the reaction, yielding dihydrofolate (DHF) as a by-product. This enzymatic reaction provides an intracellular de novo source of dTMP, an essential precursor for DNA biosynthesis. This is Thymidylate synthase from Mycobacterium leprae (strain TN).